The chain runs to 361 residues: Peptide chain release factor 1 (361 aa).

Gln-237 is subject to N5-methylglutamine. The tract at residues 285–306 is disordered; it reads QAEQSAQQTEQRRQLVGSGDRS.

It belongs to the prokaryotic/mitochondrial release factor family. In terms of processing, methylated by PrmC. Methylation increases the termination efficiency of RF1.

The protein localises to the cytoplasm. Functionally, peptide chain release factor 1 directs the termination of translation in response to the peptide chain termination codons UAG and UAA. The protein is Peptide chain release factor 1 of Alkalilimnicola ehrlichii (strain ATCC BAA-1101 / DSM 17681 / MLHE-1).